The sequence spans 916 residues: Probable dipeptidyl-aminopeptidase B (916 aa).

Disordered regions lie at residues 1-35 (MGRT…SGLS) and 67-86 (DAEA…KLGS). Residues 1-92 (MGRTGDLENA…KLGSGSRTRQ (92 aa)) lie on the Cytoplasmic side of the membrane. Residues 21–35 (TSGTSSRSSTDSGLS) show a composition bias toward low complexity. The chain crosses the membrane as a helical; Signal-anchor for type II membrane protein span at residues 93-113 (IFWALVILCLGGWVLALVLFL). Residues 114–916 (THGRASSQTA…VKRSVPAFAH (803 aa)) are Vacuolar-facing. N-linked (GlcNAc...) asparagine glycans are attached at residues Asn-349 and Asn-640. Catalysis depends on Ser-754, which acts as the Charge relay system. Asn-808 and Asn-813 each carry an N-linked (GlcNAc...) asparagine glycan. Residues Asp-831 and His-864 each act as charge relay system in the active site.

It belongs to the peptidase S9B family.

It localises to the vacuole membrane. It catalyses the reaction Release of an N-terminal dipeptide, Xaa-Yaa-|-Zaa-, from a polypeptide, preferentially when Yaa is Pro, provided Zaa is neither Pro nor hydroxyproline.. In terms of biological role, type IV dipeptidyl-peptidase which removes N-terminal dipeptides sequentially from polypeptides having unsubstituted N-termini provided that the penultimate residue is proline. In Aspergillus flavus (strain ATCC 200026 / FGSC A1120 / IAM 13836 / NRRL 3357 / JCM 12722 / SRRC 167), this protein is Probable dipeptidyl-aminopeptidase B (dapB).